The following is a 652-amino-acid chain: Leucine-rich repeat-containing protein 4 (652 aa).

The N-terminal stretch at 1-40 (MKLLWQVTVHHTWNAVLLPVVYLTAQVWILCAAIAAAASA) is a signal peptide. The region spanning 41 to 74 (GPQNCPSVCSCSNQFSKVVCTRRGLSEVPQGIPS) is the LRRNT domain. Over 41 to 526 (GPQNCPSVCS…SLDEVMKTTK (486 aa)) the chain is Extracellular. Intrachain disulfides connect C45–C51 and C49–C60. LRR repeat units lie at residues 75–96 (NTRYLNLMENNIQMIQADTFRH), 99–120 (HLEVLQLGRNSIRQIEVGAFNG), 123–144 (SLNTLELFDNWLTVIPSGAFEY), 147–168 (KLRELWLRNNPIESIPSYAFNR), 171–193 (SLMRLDLGELKKLEYISEGAFEG), 196–217 (NLKYLNLGMCNIKDMPNLTPLV), 218–239 (GLEELEMSGNHFPEIRPGSFHG), 242–263 (SLKKLWVMNSQVSLIERNAFDG), and 266–287 (SLVELNLAHNNLSSLPHDLFTP). N276, N321, N362, N387, N409, N433, N439, and N449 each carry an N-linked (GlcNAc...) asparagine glycan. The region spanning 299–351 (NPWNCDCDILWLAWWLREYIPTNSTCCGRCHAPMHMRGRYLVEVDQAAFQCSA) is the LRRCT domain. Intrachain disulfides connect C303–C328 and C305–C349. The Ig-like domain occupies 352 to 441 (PFIMDAPRDL…SNASAYLNVS (90 aa)). Residues C373 and C423 are joined by a disulfide bond. A helical membrane pass occupies residues 527-547 (IIIGCFVAVTLLAAAMLIVFY). The Cytoplasmic portion of the chain corresponds to 548–652 (KLRKRHQQRS…TKDKVQETQI (105 aa)).

Interacts (via LRR repeats) with NTNG2. Interacts with DLG4. Forms a complex with DLG4 and with NMDA receptors. Post-translationally, N-glycosylated. In terms of tissue distribution, specifically expressed in brain. In the hippocampus, parietal cortex and piriform cortex expressed in proximal segments of CA1 pyramidal neurons.

Its subcellular location is the membrane. It is found in the postsynaptic cell membrane. Its function is as follows. Synaptic adhesion protein. Regulates the formation of exitatory synapses through the recruitment of pre-and-postsynaptic proteins. Organize the lamina/pathway-specific differentiation of dendrites. Plays an important role for auditory synaptic responses. Involved in the suppression of glioma. The sequence is that of Leucine-rich repeat-containing protein 4 (Lrrc4) from Mus musculus (Mouse).